Reading from the N-terminus, the 150-residue chain is UPF0098 protein CPn_0877/CP_0992/CPj0877/CpB0906 (150 aa).

The protein belongs to the UPF0098 family.

The chain is UPF0098 protein CPn_0877/CP_0992/CPj0877/CpB0906 from Chlamydia pneumoniae (Chlamydophila pneumoniae).